The following is a 543-amino-acid chain: Ribosomal protein arginine N-methyltransferase rmt3 (543 aa).

Residues 58–81 (FCCLFCDSTFTCLKDLWSHCKEAH) form a C2H2-type zinc finger. Residues 217-543 (DSYYFESYAG…KADSQSYVLN (327 aa)) enclose the SAM-dependent MTase PRMT-type domain. S-adenosyl-L-homocysteine-binding residues include Arg239, Gly263, Asp285, Ser287, Ile313, and Glu314. Residues Glu329 and Glu338 contribute to the active site.

The protein belongs to the class I-like SAM-binding methyltransferase superfamily. Protein arginine N-methyltransferase family. As to quaternary structure, interacts with ef1a-c, rps2 and rps24. Note=Associates with the 40S ribosomal particle.

The protein localises to the cytoplasm. It localises to the cytosol. The enzyme catalyses L-arginyl-[protein] + S-adenosyl-L-methionine = N(omega)-methyl-L-arginyl-[protein] + S-adenosyl-L-homocysteine + H(+). The catalysed reaction is L-arginyl-[protein] + 2 S-adenosyl-L-methionine = N(omega),N(omega)-dimethyl-L-arginyl-[protein] + 2 S-adenosyl-L-homocysteine + 2 H(+). Functionally, methylates (mono and asymmetric dimethylation) the guanidino nitrogens of arginyl residues in ribosomal protein rps2. The sequence is that of Ribosomal protein arginine N-methyltransferase rmt3 (rmt3) from Schizosaccharomyces pombe (strain 972 / ATCC 24843) (Fission yeast).